A 359-amino-acid chain; its full sequence is UDP-N-acetylglucosamine--N-acetylmuramyl-(pentapeptide) pyrophosphoryl-undecaprenol N-acetylglucosamine transferase (359 aa).

Residues 15–17, asparagine 127, arginine 166, serine 191, isoleucine 245, 264–269, and glutamine 290 contribute to the UDP-N-acetyl-alpha-D-glucosamine site; these read TGG and ALTVSE.

It belongs to the glycosyltransferase 28 family. MurG subfamily.

It localises to the cell inner membrane. The catalysed reaction is di-trans,octa-cis-undecaprenyl diphospho-N-acetyl-alpha-D-muramoyl-L-alanyl-D-glutamyl-meso-2,6-diaminopimeloyl-D-alanyl-D-alanine + UDP-N-acetyl-alpha-D-glucosamine = di-trans,octa-cis-undecaprenyl diphospho-[N-acetyl-alpha-D-glucosaminyl-(1-&gt;4)]-N-acetyl-alpha-D-muramoyl-L-alanyl-D-glutamyl-meso-2,6-diaminopimeloyl-D-alanyl-D-alanine + UDP + H(+). The protein operates within cell wall biogenesis; peptidoglycan biosynthesis. Functionally, cell wall formation. Catalyzes the transfer of a GlcNAc subunit on undecaprenyl-pyrophosphoryl-MurNAc-pentapeptide (lipid intermediate I) to form undecaprenyl-pyrophosphoryl-MurNAc-(pentapeptide)GlcNAc (lipid intermediate II). The protein is UDP-N-acetylglucosamine--N-acetylmuramyl-(pentapeptide) pyrophosphoryl-undecaprenol N-acetylglucosamine transferase of Pseudomonas entomophila (strain L48).